Reading from the N-terminus, the 382-residue chain is MAILPLSISHSLTSALSATSSGIGRPVARLLHPRVPSRPTVICLAAPPKVPVPIASPASLGDDPSKWDPAECDALLRGGEQVASVLQEMLKLMEDMEMDGSFESLAVELIAQGVIGKRVDEMESGFLMALDYMIQLAEKDSDNERKSLLEVVKQTVLDHLTKKCPPHVQVVGLLCQTEKKDSRHELLRRVAAGGGVFKNDKGLKCQIPGANLNDIANQADDLLESMESRPTIPDRKLLARLVIVREEARNMMGGGLLDERNDRGFTTLPEAEVNFLSKLVALKPGKALERMIKDVMQGKAEGADNIENANAGPDSKLNHLTGISGRGSVTGLKPRPVRPGMFLETVSKVLGGIYANNTSGITAQHLEWVHQTTLKILQEMAF.

The N-terminal 44 residues, 1–44 (MAILPLSISHSLTSALSATSSGIGRPVARLLHPRVPSRPTVICL), are a transit peptide targeting the chloroplast.

The protein resides in the plastid. It localises to the chloroplast stroma. The protein localises to the chloroplast nucleoid. Functionally, plays an essential role in early steps of chloroplast development. May be involved in the redox control of plastid gene expression by maintening the redox state around chloroplast nucleoids. May positively regulate plastid-encoded RNA polymerase (PEP) activity. The sequence is that of Protein PEP-RELATED DEVELOPMENT ARRESTED 1 homolog, chloroplastic from Oryza sativa subsp. japonica (Rice).